The following is a 159-amino-acid chain: Putative 2'-deoxynucleoside 5'-phosphate N-hydrolase 1 (159 aa).

Substrate is bound by residues 25 to 31 (FLSGSIR), Y40, H58, E104, and 126 to 128 (SAM).

This sequence belongs to the 2'-deoxynucleoside 5'-phosphate N-hydrolase 1 family. Monomer and homodimer.

It catalyses the reaction a pyrimidine 2'-deoxyribonucleoside 5'-phosphate + H2O = a pyrimidine nucleobase + 2-deoxy-D-ribose 5-phosphate. The enzyme catalyses a purine 2'-deoxyribonucleoside 5'-phosphate + H2O = a purine nucleobase + 2-deoxy-D-ribose 5-phosphate. In terms of biological role, catalyzes the cleavage of the N-glycosidic bond of deoxyribonucleoside 5'-monophosphates to yield deoxyribose 5-phosphate and a purine or pyrimidine base. This is Putative 2'-deoxynucleoside 5'-phosphate N-hydrolase 1 from Methanosarcina barkeri (strain Fusaro / DSM 804).